Consider the following 304-residue polypeptide: Carbonic anhydrase 5A, mitochondrial (304 aa).

Residues 1-34 (MLRAKMLGRGPYKPLAILRHMGPLCATRPQHWRF) constitute a mitochondrion transit peptide. The Alpha-carbonic anhydrase domain maps to 35-295 (QHSYAEKHSN…LRGRNVRSSF (261 aa)). Residues His-129, His-131, and His-154 each coordinate Zn(2+).

This sequence belongs to the alpha-carbonic anhydrase family. The cofactor is Zn(2+). As to expression, high in liver, also detected in heart, lung, kidney, spleen and intestine.

It localises to the mitochondrion. The enzyme catalyses hydrogencarbonate + H(+) = CO2 + H2O. In terms of biological role, mitochondrial carbonic anhydrase that catalyzes the reversible conversion of carbon dioxide to bicarbonate/HCO3. Mitochondria are impermeable to HCO3, and thus this intramitochondrial carbonic anhydrase is pivotal in providing HCO3 for multiple mitochondrial enzymes that catalyze the formation of essential metabolites of intermediary metabolism in the urea and Krebs cycles. The polypeptide is Carbonic anhydrase 5A, mitochondrial (Rattus norvegicus (Rat)).